Consider the following 133-residue polypeptide: MSMGSFGFALAVMVLAVLVASAAGAPNTNLVSSACNGNKIPSGNPFFNNLGALLVDLEKNTAFSGFDYKASRAGSGGAPTAYGRGVCKQSISQSDCTACLTNLGGRIWGISKNAIGARVQLTDCFIRYEQYSI.

The N-terminal stretch at 1 to 24 (MSMGSFGFALAVMVLAVLVASAAG) is a signal peptide. The region spanning 28-133 (TNLVSSACNG…CFIRYEQYSI (106 aa)) is the Gnk2-homologous domain. Asparagine 36 is an alpha-D-mannopyranose binding site. Disulfide bonds link cysteine 87-cysteine 96 and cysteine 99-cysteine 124. Residues arginine 118 and glutamate 129 each coordinate alpha-D-mannopyranose.

In terms of biological role, exerts antifungal activity through its carbohydrate-binding specificity. This Picea glauca (White spruce) protein is Antifungal protein ginkbilobin-like protein 2.